The following is a 261-amino-acid chain: tRNA pseudouridine synthase A (261 aa).

Aspartate 51 acts as the Nucleophile in catalysis. Tyrosine 109 lines the substrate pocket.

The protein belongs to the tRNA pseudouridine synthase TruA family. Homodimer.

It carries out the reaction uridine(38/39/40) in tRNA = pseudouridine(38/39/40) in tRNA. Functionally, formation of pseudouridine at positions 38, 39 and 40 in the anticodon stem and loop of transfer RNAs. The polypeptide is tRNA pseudouridine synthase A (Photobacterium profundum (strain SS9)).